Reading from the N-terminus, the 248-residue chain is 5'-nucleotidase SurE (248 aa).

D8, D9, S39, and N91 together coordinate a divalent metal cation.

This sequence belongs to the SurE nucleotidase family. A divalent metal cation is required as a cofactor.

Its subcellular location is the cytoplasm. The enzyme catalyses a ribonucleoside 5'-phosphate + H2O = a ribonucleoside + phosphate. Its function is as follows. Nucleotidase that shows phosphatase activity on nucleoside 5'-monophosphates. The polypeptide is 5'-nucleotidase SurE (Pseudoalteromonas atlantica (strain T6c / ATCC BAA-1087)).